A 172-amino-acid polypeptide reads, in one-letter code: R-phycocyanin beta subunit (172 aa).

Asn-72 carries the N4-methylasparagine modification. Cys-82 provides a ligand contact to (2R,3E)-phycocyanobilin. A (2R,3E)-phycoerythrobilin-binding site is contributed by Cys-153.

Belongs to the phycobiliprotein family. Heterodimer of an alpha and a beta subunit, which further assembles into trimers and the trimers into hexamers. Contains two covalently linked bilin chromophores.

It is found in the cellular thylakoid membrane. Functionally, light-harvesting photosynthetic bile pigment-protein from the phycobiliprotein complex (phycobilisome, PBS). Phycocyanin is the major phycobiliprotein in the PBS rod. This Synechococcus sp. (strain WH7803) protein is R-phycocyanin beta subunit (rpcB).